A 677-amino-acid polypeptide reads, in one-letter code: Sulfate transporter 2.2 (677 aa).

Residues 1-110 (MQLSSLSHTS…QYKLNLFKKD (110 aa)) are Cytoplasmic-facing. A helical membrane pass occupies residues 111–131 (LMAGLTLASLCIPQSIGYANL). At 132-133 (AG) the chain is on the extracellular side. Residues 134-154 (LDPEYGLYTSVVPPLIYSTMG) traverse the membrane as a helical segment. Topologically, residues 155–158 (TSRE) are cytoplasmic. Residues 159–179 (LAIGPVAVVSLLLSSMVRDLQ) traverse the membrane as a helical segment. At 180 to 190 (DPVTDPIAYRK) the chain is on the extracellular side. The helical transmembrane segment at 191–211 (IVFTVTFFAGAFQAIFGLFRL) threads the bilayer. Topologically, residues 212-213 (GF) are cytoplasmic. Residues 214-234 (LVDFLSHAALVGFMAGAAIVI) form a helical membrane-spanning segment. The Extracellular portion of the chain corresponds to 235–270 (GLQQLKGLFGLTHFTNKTDVVSVLSSVFHSLHHPWQ). Asn250 carries N-linked (GlcNAc...) asparagine glycosylation. Residues 271–291 (PLNFVIGSSFLIFILLARFIG) form a helical membrane-spanning segment. At 292–296 (KRNNK) the chain is on the cytoplasmic side. Residues 297–317 (LFWIPAMAPLISVVLATLIVY) traverse the membrane as a helical segment. Topologically, residues 318-352 (LSNAESRGVKIVKHIKPGFNQLSVNQLQFKSPHLG) are extracellular. A helical transmembrane segment spans residues 353–373 (QIAKIGLISAIIALTEAIAVG). Over 374 to 389 (RSFATIKGYRLDGNKE) the chain is Cytoplasmic. A helical membrane pass occupies residues 390-410 (MMAMGFMNIAGSLSSCYVATG). Over 411–422 (SFSRTAVNFSAG) the chain is Extracellular. Residue Asn418 is glycosylated (N-linked (GlcNAc...) asparagine). Residues 423-443 (CETVVSNIVMAITVMISLEVL) traverse the membrane as a helical segment. Over 444–446 (TRF) the chain is Cytoplasmic. A helical transmembrane segment spans residues 447-467 (LYFTPTAILASIILSALPGLI). Topologically, residues 468–482 (DVSGALHIWKLDKLD) are extracellular. The chain crosses the membrane as a helical span at residues 483-503 (FLVLIAAFFGVLFASVEIGLL). At 504-677 (LAVGISFARI…RARSTSHELC (174 aa)) the chain is on the cytoplasmic side. The 127-residue stretch at 540 to 666 (YPMANKTAGL…MTVGEAVDIY (127 aa)) folds into the STAS domain.

Belongs to the SLC26A/SulP transporter (TC 2.A.53) family. As to expression, expressed in the phloem in roots and in the phloem of vascular bundles in leaves.

The protein localises to the membrane. Functionally, low-affinity H(+)/sulfate cotransporter that may be involved in the distribution of sulfate from vascular bundles to the palisade cells of the leaves. Plays a central role in the regulation of sulfate assimilation. The protein is Sulfate transporter 2.2 (SULTR2;2) of Arabidopsis thaliana (Mouse-ear cress).